The chain runs to 377 residues: Histone deacetylase 8 (377 aa).

The interval leucine 14–glycine 324 is histone deacetylase. Serine 39 bears the Phosphoserine mark. Aspartate 101 serves as a coordination point for substrate. The active-site Proton acceptor is the histidine 143. Residue glycine 151 participates in substrate binding. A divalent metal cation is bound by residues aspartate 178, histidine 180, and aspartate 267. Tyrosine 306 provides a ligand contact to substrate.

It belongs to the histone deacetylase family. HD type 1 subfamily. As to quaternary structure, interacts with CBFA2T3. Interacts with phosphorylated SMG5/EST1B; this interaction protects SMG5 from ubiquitin-mediated degradation. Associates with alpha-SMA (smooth muscle alpha-actin). A divalent metal cation is required as a cofactor. Phosphorylated by PKA on serine 39. Phosphorylation reduces deacetylase activity observed preferentially on histones H3 and H4.

It localises to the nucleus. Its subcellular location is the chromosome. It is found in the cytoplasm. It carries out the reaction N(6)-acetyl-L-lysyl-[histone] + H2O = L-lysyl-[histone] + acetate. It catalyses the reaction N(6)-acetyl-L-lysyl-[protein] + H2O = L-lysyl-[protein] + acetate. The enzyme catalyses N(6)-(2E)-butenoyl-L-lysyl-[protein] + H2O = (2E)-2-butenoate + L-lysyl-[protein]. With respect to regulation, its activity is inhibited by trichostatin A (TSA) and butyrate, 2 well known histone deacetylase inhibitors. histone deacetylase inhibitor. Histone deacetylase that catalyzes the deacetylation of lysine residues on the N-terminal part of the core histones (H2A, H2B, H3 and H4). Histone deacetylation gives a tag for epigenetic repression and plays an important role in transcriptional regulation, cell cycle progression and developmental events. Histone deacetylases act via the formation of large multiprotein complexes. Also involved in the deacetylation of cohesin complex protein SMC3 regulating release of cohesin complexes from chromatin. May play a role in smooth muscle cell contractility. In addition to protein deacetylase activity, also has protein-lysine deacylase activity: acts as a protein decrotonylase by mediating decrotonylation ((2E)-butenoyl) of histones. This chain is Histone deacetylase 8 (Hdac8), found in Mus musculus (Mouse).